Consider the following 453-residue polypeptide: UDP-N-acetylmuramoylalanine--D-glutamate ligase (453 aa).

ATP is bound at residue 117 to 123 (GANGKST).

The protein belongs to the MurCDEF family.

It localises to the cytoplasm. The catalysed reaction is UDP-N-acetyl-alpha-D-muramoyl-L-alanine + D-glutamate + ATP = UDP-N-acetyl-alpha-D-muramoyl-L-alanyl-D-glutamate + ADP + phosphate + H(+). Its pathway is cell wall biogenesis; peptidoglycan biosynthesis. Functionally, cell wall formation. Catalyzes the addition of glutamate to the nucleotide precursor UDP-N-acetylmuramoyl-L-alanine (UMA). This Methylobacillus flagellatus (strain ATCC 51484 / DSM 6875 / VKM B-1610 / KT) protein is UDP-N-acetylmuramoylalanine--D-glutamate ligase.